The following is a 389-amino-acid chain: E3 ubiquitin-protein ligase E3D (389 aa).

Ala-2 carries the N-acetylalanine modification. Residues 129-159 (PLPGDNWGALVDEWCCHPDPFANKPLHPREN) carry the BRAT1-like motif motif. Position 144 (Cys-144) interacts with Zn(2+). The tract at residues 235–257 (LPSERNFPIIPRSQFVQSVLAQC) is interaction with UBE2C. The tract at residues 353–389 (LPSTTCLELLLILSKSNATLPPSLRCMNSFQVAFLKM) is HECT-like.

In terms of assembly, interacts with UBE2C/UbcH10 (E2 ubiquitin-conjugating enzyme). In vitro, interacts with cyclin-B. In terms of processing, ubiquitinated by UBCH10 (E2 ubiquitin-conjugating enzyme).

It localises to the cytoplasm. It carries out the reaction S-ubiquitinyl-[E2 ubiquitin-conjugating enzyme]-L-cysteine + [acceptor protein]-L-lysine = [E2 ubiquitin-conjugating enzyme]-L-cysteine + N(6)-ubiquitinyl-[acceptor protein]-L-lysine.. It functions in the pathway protein modification; protein ubiquitination. In terms of biological role, E3 ubiquitin-protein ligase which accepts ubiquitin from specific E2 ubiquitin-conjugating enzymes, and transfers it to substrates, generally promoting their degradation by the proteasome. Independently of its E3 ubiquitin-protein ligase activity, acts as an inhibitor of CPSF3 endonuclease activity by blocking CPSF3 active site. The chain is E3 ubiquitin-protein ligase E3D (UBE3D) from Bos taurus (Bovine).